The sequence spans 387 residues: Mitogen-activated protein kinase homolog MMK1 (387 aa).

A Protein kinase domain is found at 55 to 340 (KPPIMPIGKG…VEDALAHPYL (286 aa)). Residues 61-69 (IGKGAYGIV) and K84 contribute to the ATP site. Catalysis depends on D181, which acts as the Proton acceptor. Residue T213 is modified to Phosphothreonine. A TXY motif is present at residues 213-215 (TEY). A Phosphotyrosine modification is found at Y215.

This sequence belongs to the protein kinase superfamily. CMGC Ser/Thr protein kinase family. MAP kinase subfamily. Mg(2+) is required as a cofactor. Post-translationally, dually phosphorylated on Thr-213 and Tyr-215, which activates the enzyme. Autophosphorylated. As to expression, roots and stems.

The catalysed reaction is L-seryl-[protein] + ATP = O-phospho-L-seryl-[protein] + ADP + H(+). It carries out the reaction L-threonyl-[protein] + ATP = O-phospho-L-threonyl-[protein] + ADP + H(+). Its activity is regulated as follows. Activated by tyrosine and threonine phosphorylation. Functionally, may play a role in the mitogenic induction of symbiotic root nodules on Alfalfa by Rhizobium signal molecules. The polypeptide is Mitogen-activated protein kinase homolog MMK1 (MMK1) (Medicago sativa (Alfalfa)).